Here is a 291-residue protein sequence, read N- to C-terminus: 4-hydroxy-tetrahydrodipicolinate synthase (291 aa).

T44 lines the pyruvate pocket. The Proton donor/acceptor role is filled by Y132. K160 functions as the Schiff-base intermediate with substrate in the catalytic mechanism. A pyruvate-binding site is contributed by I202.

Belongs to the DapA family. As to quaternary structure, homotetramer; dimer of dimers.

The protein resides in the cytoplasm. The enzyme catalyses L-aspartate 4-semialdehyde + pyruvate = (2S,4S)-4-hydroxy-2,3,4,5-tetrahydrodipicolinate + H2O + H(+). It functions in the pathway amino-acid biosynthesis; L-lysine biosynthesis via DAP pathway; (S)-tetrahydrodipicolinate from L-aspartate: step 3/4. Functionally, catalyzes the condensation of (S)-aspartate-beta-semialdehyde [(S)-ASA] and pyruvate to 4-hydroxy-tetrahydrodipicolinate (HTPA). The chain is 4-hydroxy-tetrahydrodipicolinate synthase from Roseobacter denitrificans (strain ATCC 33942 / OCh 114) (Erythrobacter sp. (strain OCh 114)).